Consider the following 86-residue polypeptide: Dynein light chain 1, cytoplasmic (86 aa).

Belongs to the dynein light chain family. As to quaternary structure, homodimer. Cytoplasmic dynein consists of two catalytic heavy chains (HCs) and a number of non-catalytic subunits which present intermediate chains (ICs), light intermediate chains (LICs) and light chains (LCs). Component of the nuclear pore complex (NPC). NPC constitutes the exclusive means of nucleocytoplasmic transport. NPCs allow the passive diffusion of ions and small molecules and the active, nuclear transport receptor-mediated bidirectional transport of macromolecules such as proteins, RNAs, ribonucleoparticles (RNPs), and ribosomal subunits across the nuclear envelope. Due to its 8-fold rotational symmetry, all subunits are present with 8 copies or multiples thereof.

The protein resides in the cytoplasm. It localises to the cytoskeleton. It is found in the nucleus. Its subcellular location is the nuclear pore complex. Functionally, acts as one of several non-catalytic accessory components of the cytoplasmic dynein complex that are thought to be involved in linking dynein to cargos and to adapter proteins that regulate dynein function. Cytoplasmic dynein 1 acts as a motor for the intracellular retrograde motility of vesicles and organelles along microtubules. May play a role in changing or maintaining the spatial distribution of cytoskeletal structures. Also a component of the nuclear pore complex. This is Dynein light chain 1, cytoplasmic (DYN2) from Candida glabrata (strain ATCC 2001 / BCRC 20586 / JCM 3761 / NBRC 0622 / NRRL Y-65 / CBS 138) (Yeast).